We begin with the raw amino-acid sequence, 172 residues long: uncharacterized protein (172 aa).

The next 3 helical transmembrane spans lie at 7–27, 59–79, and 89–109; these read ILIS…CYGI, LMIF…LYLF, and FSLT…LFVK.

It to M.jannaschii MJ0695.

It localises to the cell membrane. This is an uncharacterized protein from Methanocaldococcus jannaschii (strain ATCC 43067 / DSM 2661 / JAL-1 / JCM 10045 / NBRC 100440) (Methanococcus jannaschii).